Consider the following 230-residue polypeptide: UPF0173 metal-dependent hydrolase Mbar_A3716 (230 aa).

It belongs to the UPF0173 family.

The protein is UPF0173 metal-dependent hydrolase Mbar_A3716 of Methanosarcina barkeri (strain Fusaro / DSM 804).